A 211-amino-acid polypeptide reads, in one-letter code: Thiamine-phosphate synthase (211 aa).

4-amino-2-methyl-5-(diphosphooxymethyl)pyrimidine is bound by residues 37–41 (QLRIK) and Asn-69. Mg(2+) is bound by residues Asp-70 and Asp-89. Residue Ser-108 participates in 4-amino-2-methyl-5-(diphosphooxymethyl)pyrimidine binding. 2-[(2R,5Z)-2-carboxy-4-methylthiazol-5(2H)-ylidene]ethyl phosphate is bound at residue 134-136 (TQT). Lys-137 lines the 4-amino-2-methyl-5-(diphosphooxymethyl)pyrimidine pocket. 2-[(2R,5Z)-2-carboxy-4-methylthiazol-5(2H)-ylidene]ethyl phosphate-binding positions include Gly-166 and 186–187 (VS).

It belongs to the thiamine-phosphate synthase family. The cofactor is Mg(2+).

The catalysed reaction is 2-[(2R,5Z)-2-carboxy-4-methylthiazol-5(2H)-ylidene]ethyl phosphate + 4-amino-2-methyl-5-(diphosphooxymethyl)pyrimidine + 2 H(+) = thiamine phosphate + CO2 + diphosphate. It carries out the reaction 2-(2-carboxy-4-methylthiazol-5-yl)ethyl phosphate + 4-amino-2-methyl-5-(diphosphooxymethyl)pyrimidine + 2 H(+) = thiamine phosphate + CO2 + diphosphate. The enzyme catalyses 4-methyl-5-(2-phosphooxyethyl)-thiazole + 4-amino-2-methyl-5-(diphosphooxymethyl)pyrimidine + H(+) = thiamine phosphate + diphosphate. It participates in cofactor biosynthesis; thiamine diphosphate biosynthesis; thiamine phosphate from 4-amino-2-methyl-5-diphosphomethylpyrimidine and 4-methyl-5-(2-phosphoethyl)-thiazole: step 1/1. Functionally, condenses 4-methyl-5-(beta-hydroxyethyl)thiazole monophosphate (THZ-P) and 2-methyl-4-amino-5-hydroxymethyl pyrimidine pyrophosphate (HMP-PP) to form thiamine monophosphate (TMP). This chain is Thiamine-phosphate synthase, found in Escherichia coli O157:H7.